We begin with the raw amino-acid sequence, 334 residues long: DNA-directed RNA polymerase subunit alpha (334 aa).

The segment at 1-231 (MQSNTFLTPR…EQLSVFADLK (231 aa)) is alpha N-terminal domain (alpha-NTD). The interval 245–334 (IDPVLLRPVD…GKKDTSHAAP (90 aa)) is alpha C-terminal domain (alpha-CTD).

Belongs to the RNA polymerase alpha chain family. In terms of assembly, homodimer. The RNAP catalytic core consists of 2 alpha, 1 beta, 1 beta' and 1 omega subunit. When a sigma factor is associated with the core the holoenzyme is formed, which can initiate transcription.

It catalyses the reaction RNA(n) + a ribonucleoside 5'-triphosphate = RNA(n+1) + diphosphate. Functionally, DNA-dependent RNA polymerase catalyzes the transcription of DNA into RNA using the four ribonucleoside triphosphates as substrates. The protein is DNA-directed RNA polymerase subunit alpha of Nitrosospira multiformis (strain ATCC 25196 / NCIMB 11849 / C 71).